A 967-amino-acid chain; its full sequence is Kinesin-like protein KIF28P (967 aa).

One can recognise a Kinesin motor domain in the interval 7–355 (DSVKAVRVRP…LRYAERERKI (349 aa)). An ATP-binding site is contributed by 111–118 (GQTGSGKS). The region spanning 410–472 (APCPRPALSP…LQHLDRLILG (63 aa)) is the FHA domain. Residues 822–851 (NQIPELYLKLLKLEQETEPLRNINRALREE) are a coiled coil.

The protein belongs to the TRAFAC class myosin-kinesin ATPase superfamily. Kinesin family.

It is found in the mitochondrion membrane. Functionally, microtubule-dependent motor protein required for mitochondrion morphology and transport of mitochondria in neuronal cells. This chain is Kinesin-like protein KIF28P (KIF28P), found in Homo sapiens (Human).